The chain runs to 89 residues: Large ribosomal subunit protein bL27 (89 aa).

The interval 1 to 24 (MAHKKAGGSSRNGRDSDGRRLGVK) is disordered.

It belongs to the bacterial ribosomal protein bL27 family.

This Azorhizobium caulinodans (strain ATCC 43989 / DSM 5975 / JCM 20966 / LMG 6465 / NBRC 14845 / NCIMB 13405 / ORS 571) protein is Large ribosomal subunit protein bL27.